The following is a 272-amino-acid chain: Putative phosphoenolpyruvate synthase regulatory protein (272 aa).

152–159 serves as a coordination point for ADP; it reads GVSRCGKT.

Belongs to the pyruvate, phosphate/water dikinase regulatory protein family. PSRP subfamily.

It carries out the reaction [pyruvate, water dikinase] + ADP = [pyruvate, water dikinase]-phosphate + AMP + H(+). It catalyses the reaction [pyruvate, water dikinase]-phosphate + phosphate + H(+) = [pyruvate, water dikinase] + diphosphate. Bifunctional serine/threonine kinase and phosphorylase involved in the regulation of the phosphoenolpyruvate synthase (PEPS) by catalyzing its phosphorylation/dephosphorylation. The sequence is that of Putative phosphoenolpyruvate synthase regulatory protein from Stutzerimonas stutzeri (strain A1501) (Pseudomonas stutzeri).